A 5207-amino-acid polypeptide reads, in one-letter code: NBPF family member NBPF20 (5207 aa).

Olduvai domains are found at residues 5–77 (SREL…PSCP), 80–135 (SREL…LDVD), 136–228 (RTKK…RSKK), 229–321 (ERRR…PSCP), 324–379 (SREL…LDVD), 380–472 (RTKK…RSKK), 473–565 (ERRR…PSCP), 568–623 (SREL…LDVD), 624–716 (RTKK…RSKK), 717–809 (ERRR…PSCP), 812–867 (SREL…LDVD), 868–960 (RTKK…RSKK), 961–1053 (ERRR…PSCP), 1056–1111 (SREL…LDVD), 1112–1204 (RTKK…RSKK), 1205–1297 (ERRR…PSCP), 1300–1355 (SREL…LDVD), 1356–1448 (RTKK…RSKK), 1449–1541 (ERRR…PSCP), 1544–1599 (SREL…LDVD), 1600–1692 (RTKK…RSKK), 1693–1785 (ERRR…PSCP), 1788–1843 (SREL…LDVD), 1844–1936 (RTKK…RSKK), 1937–2029 (ERRR…PSCP), 2032–2087 (SREL…LDVD), 2088–2180 (RTKK…RSKK), 2181–2273 (ERRR…PSCP), 2276–2331 (SREL…LDVD), 2332–2424 (RTKK…RSKK), 2425–2517 (ERRR…PSCP), 2520–2575 (SREL…LDVD), 2576–2668 (RTKK…RSKK), 2669–2761 (ERRR…PSCP), 2764–2819 (SREL…LDVD), 2820–2912 (RTKK…RSKK), 2913–3005 (ERRR…PSCP), 3008–3063 (SREL…LDVD), 3064–3156 (RTKK…RSKK), 3157–3249 (ERRR…PSCP), 3252–3307 (SREL…LDVD), 3308–3400 (RTKK…RSKK), 3401–3493 (ERRR…PSCP), 3496–3551 (SREL…LDVD), 3552–3644 (RTKK…RSKK), 3645–3737 (ERRR…PSCP), 3740–3795 (SREL…LDVD), 3796–3888 (RTKK…RSKK), 3889–3981 (ERRR…PSCP), 3984–4039 (SREL…LDVD), 4040–4132 (RTKK…RSKK), 4133–4225 (ERRR…PSCP), 4228–4283 (SREL…LDVD), 4284–4376 (RTKK…RSKK), 4377–4452 (ERRR…LDVD), 4453–4545 (RTKK…RSKK), 4546–4621 (ERRR…LDVD), 4622–4713 (RTKK…PSCP), 4716–4771 (SREL…LDVD), 4772–4864 (RTKK…RSKK), 4865–4957 (ERRR…PSCP), 4960–5015 (SREL…LDVD), 5016–5108 (RTKK…RSKK), and 5109–5207 (KRRR…IFPQ). Disordered stretches follow at residues 137-157 (TKKD…LSRE) and 215-256 (KGKG…LDEK). The span at 216-234 (GKGKKRRGRRSKKERRRGR) shows a compositional bias: basic residues. Disordered regions lie at residues 381 to 403 (TKKD…RELL) and 459 to 513 (KGKG…DRSY). The segment covering 460–478 (GKGKKRRGRRSKKERRRGR) has biased composition (basic residues). Residues 492–502 (LSRELLDEKGP) show a composition bias toward basic and acidic residues. 2 disordered regions span residues 625–647 (TKKD…RELL) and 703–744 (KGKG…LDEK). The segment covering 704–722 (GKGKKRRGRRSKKERRRGR) has biased composition (basic residues). 2 disordered regions span residues 869-891 (TKKD…RELL) and 947-1001 (KGKG…DRSY). The segment covering 948 to 966 (GKGKKRRGRRSKKERRRGR) has biased composition (basic residues). Basic and acidic residues predominate over residues 980-990 (LSRELLDEKGP). 2 disordered regions span residues 1113–1135 (TKKD…RELL) and 1191–1245 (KGKG…DRSY). The span at 1192–1210 (GKGKKRRGRRSKKERRRGR) shows a compositional bias: basic residues. The span at 1224–1234 (LSRELLDEKGP) shows a compositional bias: basic and acidic residues. Disordered regions lie at residues 1357-1379 (TKKD…RELL) and 1435-1489 (KGKG…DRSY). Basic residues predominate over residues 1436–1454 (GKGKKRRGRRSKKERRRGR). The segment covering 1468 to 1478 (LSRELLDEKGP) has biased composition (basic and acidic residues). 2 disordered regions span residues 1601–1623 (TKKD…RELL) and 1679–1733 (KGKG…DRSY). Basic residues predominate over residues 1680–1698 (GKGKKRRGRRSKKERRRGR). Over residues 1712–1722 (LSRELLDEKGP) the composition is skewed to basic and acidic residues. Disordered stretches follow at residues 1845-1867 (TKKD…RELL) and 1923-1964 (KGKG…LDEK). Positions 1924 to 1942 (GKGKKRRGRRSKKERRRGR) are enriched in basic residues. Disordered regions lie at residues 2089–2111 (TKKD…RELL) and 2167–2208 (KGKG…LDEK). Positions 2168-2186 (GKGKKRRGRRSKKERRRGR) are enriched in basic residues. Disordered stretches follow at residues 2333-2355 (TKKD…RELL) and 2411-2452 (KGKG…LDEK). Residues 2412–2430 (GKGKKRRGRRSKKERRRGR) show a composition bias toward basic residues. Disordered regions lie at residues 2577 to 2599 (TKKD…RELL) and 2655 to 2709 (KGKG…DRSY). Over residues 2656 to 2674 (GKGKKRRGRRSKKERRRGR) the composition is skewed to basic residues. Positions 2688–2698 (LSRELLDEKGP) are enriched in basic and acidic residues. Disordered regions lie at residues 2821–2843 (TKKD…RELL) and 2899–2953 (KGKG…DRSY). Positions 2900–2918 (GKGKKRRGRRSKKERRRGR) are enriched in basic residues. Positions 2932 to 2942 (LSRELLDEKGP) are enriched in basic and acidic residues. Disordered regions lie at residues 3065-3087 (TKKD…RELL) and 3143-3197 (KGKG…DRSY). The span at 3144–3162 (GKGKKRRGRRSKKERRRGR) shows a compositional bias: basic residues. The span at 3176–3186 (LSRELLDEKGP) shows a compositional bias: basic and acidic residues. Disordered stretches follow at residues 3309-3331 (TKKD…RELL) and 3387-3441 (KGKG…DRSY). Residues 3388–3406 (GKGKKRRGRRSKKERRRGR) are compositionally biased toward basic residues. Basic and acidic residues predominate over residues 3420–3430 (LSRELLDEKGP). 2 disordered regions span residues 3553-3575 (TKKD…RELL) and 3631-3672 (KGKG…LDEK). The span at 3632 to 3650 (GKGKKRRGRRSKKERRRGR) shows a compositional bias: basic residues. 2 disordered regions span residues 3797-3819 (TKKD…RELL) and 3875-3916 (KGKG…LDEK). Residues 3876–3894 (GKGKKRRGRRSKKERRRGR) show a composition bias toward basic residues. 2 disordered regions span residues 4041 to 4063 (TKKD…RELL) and 4119 to 4160 (KGKG…LDEK). Positions 4120–4138 (GKGKKRRGRRSKKERRRGR) are enriched in basic residues. Disordered stretches follow at residues 4285 to 4307 (TKKD…RELL), 4361 to 4404 (EKKG…LDEK), 4453 to 4474 (RTKK…LSRE), and 4530 to 4573 (EKKG…LDEK). The segment covering 4364-4382 (GKGKKRRGRRSKKERRRGR) has biased composition (basic residues). The segment covering 4533–4551 (GKGKKRRGRRSKKERRRGR) has biased composition (basic residues). 2 disordered regions span residues 4773–4793 (TKKD…LSRE) and 4851–4889 (KGKG…RELL). A compositionally biased stretch (basic residues) spans 4852–4870 (GKGKKRRGRRSKKERRRGR). Disordered stretches follow at residues 5017 to 5037 (TKKD…LSRE) and 5094 to 5128 (KKGK…CPRL). A compositionally biased stretch (basic residues) spans 5096–5114 (GKGKKRRGRRSKKKRRRGR).

It belongs to the NBPF family.

It is found in the cytoplasm. This is NBPF family member NBPF20 from Homo sapiens (Human).